Reading from the N-terminus, the 230-residue chain is Protein GrpE (230 aa).

Disordered stretches follow at residues 1 to 26 (MADE…DREA) and 209 to 230 (GVSK…EDNA). Polar residues predominate over residues 221-230 (NGASTSEDNA).

It belongs to the GrpE family. Homodimer.

It is found in the cytoplasm. Its function is as follows. Participates actively in the response to hyperosmotic and heat shock by preventing the aggregation of stress-denatured proteins, in association with DnaK and GrpE. It is the nucleotide exchange factor for DnaK and may function as a thermosensor. Unfolded proteins bind initially to DnaJ; upon interaction with the DnaJ-bound protein, DnaK hydrolyzes its bound ATP, resulting in the formation of a stable complex. GrpE releases ADP from DnaK; ATP binding to DnaK triggers the release of the substrate protein, thus completing the reaction cycle. Several rounds of ATP-dependent interactions between DnaJ, DnaK and GrpE are required for fully efficient folding. This chain is Protein GrpE, found in Brucella suis biovar 1 (strain 1330).